A 350-amino-acid polypeptide reads, in one-letter code: Methylthioribose-1-phosphate isomerase (350 aa).

Substrate-binding positions include R47–A49, R89, and Q196. D237 (proton donor) is an active-site residue. N247 to K248 contacts substrate.

It belongs to the eIF-2B alpha/beta/delta subunits family. MtnA subfamily.

It catalyses the reaction 5-(methylsulfanyl)-alpha-D-ribose 1-phosphate = 5-(methylsulfanyl)-D-ribulose 1-phosphate. The protein operates within amino-acid biosynthesis; L-methionine biosynthesis via salvage pathway; L-methionine from S-methyl-5-thio-alpha-D-ribose 1-phosphate: step 1/6. Its function is as follows. Catalyzes the interconversion of methylthioribose-1-phosphate (MTR-1-P) into methylthioribulose-1-phosphate (MTRu-1-P). The polypeptide is Methylthioribose-1-phosphate isomerase (Nitratidesulfovibrio vulgaris (strain DSM 19637 / Miyazaki F) (Desulfovibrio vulgaris)).